Here is a 249-residue protein sequence, read N- to C-terminus: Cell surface glycoprotein CD200 receptor 2 (249 aa).

An N-terminal signal peptide occupies residues 1-24 (MHALGRTPALTLLIFIYNFVSVYT). Residues 25 to 124 (IVSVQMGTKA…GNFHKVYDLQ (100 aa)) enclose the Ig-like V-type domain. Residues 25–220 (IVSVQMGTKA…TTSTTPSLLT (196 aa)) are Extracellular-facing. Cysteines 38 and 108 form a disulfide. N-linked (GlcNAc...) asparagine glycosylation is found at asparagine 73, asparagine 138, and asparagine 171. The region spanning 113-208 (PEGNFHKVYD…GNQSLSIELS (96 aa)) is the Ig-like C2-type domain. Cysteine 143 and cysteine 192 are joined by a disulfide. The helical transmembrane segment at 221–241 (ILYVKMVLLGIILLKVGFAFF) threads the bilayer. At 242 to 249 (QKRNVTRT) the chain is on the cytoplasmic side.

This sequence belongs to the CD200R family. Expressed in bone marrow, spleen, brain, lung, testis and thymus.

Its subcellular location is the membrane. Functionally, according to PubMed:15187158 it is a receptor for the CD200 cell surface glycoprotein. According to PubMed:16081818 it is not a receptor for the CD200/OX2 cell surface glycoprotein. Involved in the recruitment or surface expression of the TYROBP receptor. This Mus musculus (Mouse) protein is Cell surface glycoprotein CD200 receptor 2 (Cd200r1l).